A 301-amino-acid chain; its full sequence is MSEDIRRGPGRPPKKRVVPNFERKGILEKPVRPQSRLEFSYDNPLIFKNLFIYFKNLKSKNILVRCTPTEITFFSRDQSQASFVIATIDGKNVNHYYASDVFWLGINRELVEKMFNSIDRSFLKITIVHRYDKPETLFFIFTDFDIDKECTYQITVSEPELDMDLIEMEKSISEERLKNYPLRWEFTSKQLKKTFSDLSNYTELVTIEKLGGDTPLHLYFQKFNSISYHEMYKSSNKINLTSTIPKSQVFQINVKIAHIKSLASAMVTDKIRILCEENGNLIFQSEMDALMLNTITLNNMI.

It belongs to the asfivirus E301R family. As to quaternary structure, interacts with host IRF3.

Functionally, plays a role in the inhibition of host innate immune system by acting as a negatively regulator of type I interferon production. Mechanistically, interacts with and prevents host IRF3 nuclear localization to inhibit its transcriptional activity. This is an uncharacterized protein from African swine fever virus (isolate Warthog/Namibia/Wart80/1980) (ASFV).